Consider the following 285-residue polypeptide: Bis(5'-nucleosyl)-tetraphosphatase, symmetrical (285 aa).

The protein belongs to the Ap4A hydrolase family.

It catalyses the reaction P(1),P(4)-bis(5'-adenosyl) tetraphosphate + H2O = 2 ADP + 2 H(+). Its function is as follows. Hydrolyzes diadenosine 5',5'''-P1,P4-tetraphosphate to yield ADP. In Colwellia psychrerythraea (strain 34H / ATCC BAA-681) (Vibrio psychroerythus), this protein is Bis(5'-nucleosyl)-tetraphosphatase, symmetrical.